Reading from the N-terminus, the 453-residue chain is Glutamyl-tRNA(Gln) amidotransferase subunit A (453 aa).

Catalysis depends on charge relay system residues Lys53 and Ser128. Ser152 (acyl-ester intermediate) is an active-site residue.

This sequence belongs to the amidase family. GatA subfamily. In terms of assembly, heterotrimer of A, B and C subunits.

It catalyses the reaction L-glutamyl-tRNA(Gln) + L-glutamine + ATP + H2O = L-glutaminyl-tRNA(Gln) + L-glutamate + ADP + phosphate + H(+). Its function is as follows. Allows the formation of correctly charged Gln-tRNA(Gln) through the transamidation of misacylated Glu-tRNA(Gln) in organisms which lack glutaminyl-tRNA synthetase. The reaction takes place in the presence of glutamine and ATP through an activated gamma-phospho-Glu-tRNA(Gln). The protein is Glutamyl-tRNA(Gln) amidotransferase subunit A of Helicobacter pylori (strain P12).